We begin with the raw amino-acid sequence, 1074 residues long: Isoleucine--tRNA ligase (1074 aa).

The short motif at 50–60 (PYTSGAAHMGT) is the 'HIGH' region element. A 'KMSKS' region motif is present at residues 605 to 609 (GMSKS). Lys-608 contributes to the ATP binding site.

This sequence belongs to the class-I aminoacyl-tRNA synthetase family. IleS type 2 subfamily. In terms of assembly, monomer. It depends on Zn(2+) as a cofactor.

It localises to the cytoplasm. The enzyme catalyses tRNA(Ile) + L-isoleucine + ATP = L-isoleucyl-tRNA(Ile) + AMP + diphosphate. Catalyzes the attachment of isoleucine to tRNA(Ile). As IleRS can inadvertently accommodate and process structurally similar amino acids such as valine, to avoid such errors it has two additional distinct tRNA(Ile)-dependent editing activities. One activity is designated as 'pretransfer' editing and involves the hydrolysis of activated Val-AMP. The other activity is designated 'posttransfer' editing and involves deacylation of mischarged Val-tRNA(Ile). The polypeptide is Isoleucine--tRNA ligase (Haloarcula marismortui (strain ATCC 43049 / DSM 3752 / JCM 8966 / VKM B-1809) (Halobacterium marismortui)).